A 185-amino-acid polypeptide reads, in one-letter code: ATP-dependent protease subunit HslV (185 aa).

Threonine 13 is a catalytic residue. Residues glycine 167, cysteine 170, and threonine 173 each coordinate Na(+).

It belongs to the peptidase T1B family. HslV subfamily. A double ring-shaped homohexamer of HslV is capped on each side by a ring-shaped HslU homohexamer. The assembly of the HslU/HslV complex is dependent on binding of ATP.

The protein localises to the cytoplasm. The catalysed reaction is ATP-dependent cleavage of peptide bonds with broad specificity.. Allosterically activated by HslU binding. Protease subunit of a proteasome-like degradation complex believed to be a general protein degrading machinery. The protein is ATP-dependent protease subunit HslV of Sinorhizobium medicae (strain WSM419) (Ensifer medicae).